A 259-amino-acid chain; its full sequence is MNLLEKTRKINAMLQKAAGRPVNFKEMAETLCDVIEANVFVVSRRGKLLGFAIKQSIENERMKRMLEERQFPEEYTRNLFNITETSPNIDINSEYTAFPVENRDLFKTGLTTIVPINGGGERLGTLILSRLDREFDNDDLILAEYGATVVGMEILREKAEEIEEEARSKAVVQMAISSLSYSELEAIEHIFEELDGTEGLLVASKIADRVGITRSVIVNALRKLESAGVIESRSLGMKGTYIKVLNDKFLTELEKLKSN.

Residues 1–155 form a GAF domain region; the sequence is MNLLEKTRKI…GATVVGMEIL (155 aa). A DNA-binding region (H-T-H motif) is located at residues 203–222; it reads ASKIADRVGITRSVIVNALR. A Phosphoserine modification is found at S215.

The protein belongs to the CodY family.

It localises to the cytoplasm. Functionally, DNA-binding global transcriptional regulator which is involved in the adaptive response to starvation and acts by directly or indirectly controlling the expression of numerous genes in response to nutrient availability. During rapid exponential growth, CodY is highly active and represses genes whose products allow adaptation to nutrient depletion. The chain is Global transcriptional regulator CodY from Geobacillus thermodenitrificans (strain NG80-2).